A 240-amino-acid polypeptide reads, in one-letter code: Membrane-spanning 4-domains subfamily A member 15 (240 aa).

A run of 4 helical transmembrane segments spans residues 73 to 93 (VLGT…SVLL), 100 to 120 (VGIF…FIIS), 144 to 164 (ILSV…FGVT), and 173 to 193 (LAVL…AMHF).

The protein belongs to the MS4A family.

It is found in the membrane. Its function is as follows. May be involved in signal transduction as a component of a multimeric receptor complex. This Homo sapiens (Human) protein is Membrane-spanning 4-domains subfamily A member 15 (MS4A15).